The following is a 126-amino-acid chain: MSNITPGELIPADKPVEINADRETTSVTVENTGDRPSQVGSHFHFFETNPALSFDRKSAYGMRLDIPAGTAIRFEPGCEKDVDLVAIGGDRIVKGMGGLVNGELDADETREQAFERARNADYMEEQ.

This sequence belongs to the urease beta subunit family. Heterotrimer of UreA (gamma), UreB (beta) and UreC (alpha) subunits. Three heterotrimers associate to form the active enzyme.

The protein resides in the cytoplasm. The enzyme catalyses urea + 2 H2O + H(+) = hydrogencarbonate + 2 NH4(+). It participates in nitrogen metabolism; urea degradation; CO(2) and NH(3) from urea (urease route): step 1/1. This Haloquadratum walsbyi (strain DSM 16790 / HBSQ001) protein is Urease subunit beta.